Reading from the N-terminus, the 503-residue chain is Aromatase (503 aa).

A helical transmembrane segment spans residues 21–41 (VTVSAMPLLLIMGLLLLIWNC). Residues Asp309 and Met374 each coordinate substrate. Cys437 provides a ligand contact to heme.

This sequence belongs to the cytochrome P450 family. Heme is required as a cofactor.

The protein localises to the endoplasmic reticulum membrane. The protein resides in the microsome membrane. It catalyses the reaction testosterone + 3 reduced [NADPH--hemoprotein reductase] + 3 O2 = 17beta-estradiol + formate + 3 oxidized [NADPH--hemoprotein reductase] + 4 H2O + 4 H(+). It carries out the reaction androst-4-ene-3,17-dione + 3 reduced [NADPH--hemoprotein reductase] + 3 O2 = estrone + formate + 3 oxidized [NADPH--hemoprotein reductase] + 4 H2O + 4 H(+). The catalysed reaction is androst-4-ene-3,17-dione + reduced [NADPH--hemoprotein reductase] + O2 = 19-hydroxyandrost-4-ene-3,17-dione + oxidized [NADPH--hemoprotein reductase] + H2O + H(+). The enzyme catalyses 19-hydroxyandrost-4-ene-3,17-dione + reduced [NADPH--hemoprotein reductase] + O2 = 19-oxo-androst-4-ene-3,17-dione + oxidized [NADPH--hemoprotein reductase] + 2 H2O + H(+). It catalyses the reaction 19-oxo-androst-4-ene-3,17-dione + reduced [NADPH--hemoprotein reductase] + O2 = estrone + formate + oxidized [NADPH--hemoprotein reductase] + H2O + 2 H(+). It carries out the reaction estrone + reduced [NADPH--hemoprotein reductase] + O2 = 2-hydroxyestrone + oxidized [NADPH--hemoprotein reductase] + H2O + H(+). The catalysed reaction is 17beta-hydroxy-5alpha-androstan-3-one + reduced [NADPH--hemoprotein reductase] + O2 = 17beta,19-dihydroxy-3-oxo-5alpha-androstanone + oxidized [NADPH--hemoprotein reductase] + H2O + H(+). The enzyme catalyses 17beta,19-dihydroxy-3-oxo-5alpha-androstanone + reduced [NADPH--hemoprotein reductase] + O2 = 17beta-hydroxy-3,19-dioxo-5alpha-androstanone + oxidized [NADPH--hemoprotein reductase] + 2 H2O + H(+). It catalyses the reaction 17beta-hydroxy-3,19-dioxo-5alpha-androstanone + reduced [NADPH--hemoprotein reductase] + O2 = 17beta-hydroxy-3-oxo-19-nor-5alpha-androst-1-ene + formate + oxidized [NADPH--hemoprotein reductase] + H2O + 2 H(+). It functions in the pathway steroid hormone biosynthesis. Functionally, a cytochrome P450 monooxygenase that catalyzes the conversion of C19 androgens, androst-4-ene-3,17-dione (androstenedione) and testosterone to the C18 estrogens, estrone and estradiol, respectively. Catalyzes three successive oxidations of C19 androgens: two conventional oxidations at C19 yielding 19-hydroxy and 19-oxo/19-aldehyde derivatives, followed by a third oxidative aromatization step that involves C1-beta hydrogen abstraction combined with cleavage of the C10-C19 bond to yield a phenolic A ring and formic acid. Alternatively, the third oxidative reaction yields a 19-norsteroid and formic acid. Converts dihydrotestosterone to delta1,10-dehydro 19-nordihydrotestosterone and may play a role in homeostasis of this potent androgen. Also displays 2-hydroxylase activity toward estrone. Mechanistically, uses molecular oxygen inserting one oxygen atom into a substrate, and reducing the second into a water molecule, with two electrons provided by NADPH via cytochrome P450 reductase (CPR; NADPH-ferrihemoprotein reductase). The chain is Aromatase (Cyp19a1) from Mus musculus (Mouse).